The primary structure comprises 102 residues: Feather keratin (102 aa).

Serine 1 is subject to N-acetylserine.

This sequence belongs to the avian keratin family. In terms of assembly, the avian keratins (F-ker, S-ker, C-ker and B-ker) are a complex mixture of very similar polypeptides.

In Dromaius novaehollandiae (Emu), this protein is Feather keratin.